The sequence spans 492 residues: ATP synthase subunit beta, chloroplastic (492 aa).

170–177 (GGAGVGKT) provides a ligand contact to ATP.

It belongs to the ATPase alpha/beta chains family. As to quaternary structure, F-type ATPases have 2 components, CF(1) - the catalytic core - and CF(0) - the membrane proton channel. CF(1) has five subunits: alpha(3), beta(3), gamma(1), delta(1), epsilon(1). CF(0) has four main subunits: a(1), b(1), b'(1) and c(9-12).

Its subcellular location is the plastid. It localises to the chloroplast thylakoid membrane. The catalysed reaction is ATP + H2O + 4 H(+)(in) = ADP + phosphate + 5 H(+)(out). In terms of biological role, produces ATP from ADP in the presence of a proton gradient across the membrane. The catalytic sites are hosted primarily by the beta subunits. The sequence is that of ATP synthase subunit beta, chloroplastic from Huperzia lucidula (Shining clubmoss).